The following is a 277-amino-acid chain: uncharacterized protein (277 aa).

Solcar repeat units lie at residues 1–84 (MDQA…SKRV), 96–179 (ISVL…LKLW), and 184–268 (PTSL…VGMH). The next 6 helical transmembrane spans lie at 3-24 (QAIAGLAAGTASTLIMHPLDLA), 60-80 (LSINVLGSAASWGAYFCIYDF), 102-122 (LCSSGFAGCIVAALTNPIWVV), 152-172 (CYAGFAPSLLGVSQGALQFMA), 190-210 (IFMSAASKVFAAVNMYPLLVI), and 240-261 (FYKGFLPHLLRVVPQTCITFLV).

Belongs to the mitochondrial carrier (TC 2.A.29) family.

Its subcellular location is the mitochondrion inner membrane. This is an uncharacterized protein from Schizosaccharomyces pombe (strain 972 / ATCC 24843) (Fission yeast).